The chain runs to 434 residues: Isocitrate lyase (434 aa).

91-93 provides a ligand contact to substrate; the sequence is SGW. Residue Asp-157 coordinates Mg(2+). Cys-195 acts as the Proton acceptor in catalysis. Residues 196 to 197, Arg-232, 317 to 321, and Thr-351 contribute to the substrate site; these read GH and NCSPS.

This sequence belongs to the isocitrate lyase/PEP mutase superfamily. Isocitrate lyase family. Homotetramer. Mg(2+) serves as cofactor.

It carries out the reaction D-threo-isocitrate = glyoxylate + succinate. It participates in carbohydrate metabolism; glyoxylate cycle; (S)-malate from isocitrate: step 1/2. Its function is as follows. Involved in the metabolic adaptation in response to environmental changes. Catalyzes the reversible formation of succinate and glyoxylate from isocitrate, a key step of the glyoxylate cycle, which operates as an anaplerotic route for replenishing the tricarboxylic acid cycle during growth on fatty acid substrates. This chain is Isocitrate lyase (aceA), found in Salmonella typhimurium (strain LT2 / SGSC1412 / ATCC 700720).